An 884-amino-acid polypeptide reads, in one-letter code: Exocyst complex component 2 (884 aa).

Residues 1-11 (MEENAQARERL) show a composition bias toward basic and acidic residues. Residues 1-27 (MEENAQARERLPPTVTGLSPTEGVPGT) are disordered. Residues 13 to 98 (PTVTGLSPTE…GSSNVKFRVF (86 aa)) enclose the IPT/TIG domain. Coiled coils occupy residues 178–206 (ADAT…SEEM) and 846–874 (NQRL…AENL).

Belongs to the SEC5 family. The exocyst complex is composed of sec-3/exoc1, sec-5/exoc2, sec-6/exoc3, sec-8/exoc4, sec-10/exoc5, sec-15/exoc6, exo-70/exoc7 and exo-84/exoc8.

Component of the exocyst complex involved in the docking of exocytic vesicles with fusion sites on the plasma membrane. The chain is Exocyst complex component 2 (sec-5) from Caenorhabditis elegans.